Reading from the N-terminus, the 108-residue chain is UPF0060 membrane protein Msil_1658 (108 aa).

Transmembrane regions (helical) follow at residues 5–25 (LVYV…WAWL), 31–51 (SLWL…LTLI), 62–82 (AYGG…EGVW), and 88–108 (LGGA…PRPA).

It belongs to the UPF0060 family.

The protein localises to the cell inner membrane. The chain is UPF0060 membrane protein Msil_1658 from Methylocella silvestris (strain DSM 15510 / CIP 108128 / LMG 27833 / NCIMB 13906 / BL2).